Reading from the N-terminus, the 581-residue chain is Colicin-E2 (581 aa).

5 disordered regions span residues 1-74 (MSGG…SGGG), 242-269 (QTLS…NTRD), 293-320 (PDQV…EAAE), 421-488 (ADAA…IADK), and 513-566 (DLSK…MNNI). Over residues 20–35 (INGGPTGLGVGGGASD) the composition is skewed to gly residues. The segment covering 36–45 (GSGWSSENNP) has biased composition (low complexity). The span at 46 to 74 (WGGGSGSGIHWGGGSGHGNGGGNGNSGGG) shows a compositional bias: gly residues. Residues 242-251 (QTLSPGVTNN) show a composition bias toward polar residues. 3 stretches are compositionally biased toward basic and acidic residues: residues 296–320 (VKQR…EAAE), 429–452 (QERR…ESKR), and 464–475 (PVGDKWLDDAGK). Over residues 518-527 (FKGSNKTNIQ) the composition is skewed to polar residues. The span at 535–554 (RKKDQVGGRERFELHHDKPI) shows a compositional bias: basic and acidic residues. 3 residues coordinate Zn(2+): histidine 549, histidine 574, and histidine 578.

It belongs to the colicin/pyosin nuclease family.

This plasmid-coded bactericidal protein is an endonuclease active on both single- and double-stranded DNA but with undefined specificity. In terms of biological role, colicins are polypeptide toxins produced by and active against E.coli and closely related bacteria. The chain is Colicin-E2 (col) from Escherichia coli.